A 312-amino-acid chain; its full sequence is Zinc import ATP-binding protein ZnuC (312 aa).

One can recognise an ABC transporter domain in the interval 13–228 (VSLEDVGVLR…PEYVRLFGSR (216 aa)). Residue 45–52 (GPNGSGKS) coordinates ATP. The tract at residues 241–312 (DHTHLPDGRV…HSRSGEGRHA (72 aa)) is disordered. Residues 243 to 312 (THLPDGRVLH…HSRSGEGRHA (70 aa)) show a composition bias toward basic and acidic residues.

The protein belongs to the ABC transporter superfamily. Zinc importer (TC 3.A.1.15.5) family. The complex is composed of two ATP-binding proteins (ZnuC), two transmembrane proteins (ZnuB) and a solute-binding protein (ZnuA).

The protein resides in the cell inner membrane. It carries out the reaction Zn(2+)(out) + ATP(in) + H2O(in) = Zn(2+)(in) + ADP(in) + phosphate(in) + H(+)(in). In terms of biological role, part of the ABC transporter complex ZnuABC involved in zinc import. Responsible for energy coupling to the transport system. The protein is Zinc import ATP-binding protein ZnuC of Rhizobium etli (strain ATCC 51251 / DSM 11541 / JCM 21823 / NBRC 15573 / CFN 42).